The primary structure comprises 211 residues: ATP-dependent dethiobiotin synthetase BioD (211 aa).

Residue G13–V18 participates in ATP binding. Residue T17 participates in Mg(2+) binding. The active site involves K33. Mg(2+)-binding residues include C47 and E101. Residues E101–G104, P185–L187, and N192 each bind ATP.

This sequence belongs to the dethiobiotin synthetase family. In terms of assembly, homodimer. The cofactor is Mg(2+).

Its subcellular location is the cytoplasm. It catalyses the reaction (7R,8S)-7,8-diammoniononanoate + CO2 + ATP = (4R,5S)-dethiobiotin + ADP + phosphate + 3 H(+). It functions in the pathway cofactor biosynthesis; biotin biosynthesis; biotin from 7,8-diaminononanoate: step 1/2. Functionally, catalyzes a mechanistically unusual reaction, the ATP-dependent insertion of CO2 between the N7 and N8 nitrogen atoms of 7,8-diaminopelargonic acid (DAPA, also called 7,8-diammoniononanoate) to form a ureido ring. In Bradyrhizobium diazoefficiens (strain JCM 10833 / BCRC 13528 / IAM 13628 / NBRC 14792 / USDA 110), this protein is ATP-dependent dethiobiotin synthetase BioD.